The primary structure comprises 188 residues: Mitochondrial import inner membrane translocase subunit Tim23B (188 aa).

2 consecutive transmembrane segments (helical) span residues 73 to 93 (FELA…FGAM) and 125 to 145 (ALWA…GVII).

It belongs to the Tim17/Tim22/Tim23 family.

The protein localises to the mitochondrion inner membrane. In terms of biological role, may participate in the translocation of transit peptide-containing proteins across the mitochondrial inner membrane. the PAM complex. The chain is Mitochondrial import inner membrane translocase subunit Tim23B from Homo sapiens (Human).